A 198-amino-acid polypeptide reads, in one-letter code: Putative manganese efflux pump MntP (198 aa).

6 helical membrane-spanning segments follow: residues 3–23, 37–57, 65–85, 105–127, 131–153, and 171–191; these read SIEL…VAIC, VLTG…GYLL, ITSI…INMI, SLTV…FAFL, IIPA…VKIG, and ILIG…SFVF.

It belongs to the MntP (TC 9.B.29) family.

The protein localises to the cell membrane. Its function is as follows. Probably functions as a manganese efflux pump. The polypeptide is Putative manganese efflux pump MntP (Acetivibrio thermocellus (strain ATCC 27405 / DSM 1237 / JCM 9322 / NBRC 103400 / NCIMB 10682 / NRRL B-4536 / VPI 7372) (Clostridium thermocellum)).